Reading from the N-terminus, the 501-residue chain is MTYVLGIDLGTSSLKGILMDEVGNLITTKSAEYQIDTPKQGYSEQRPEYWIVALESVLTGLSVEISDFGQQLAGISFSGQMHSLVVLDDNNKPVYPAILWNDVRTSKQCQEITDRLGQRLLEITKNIALEGFTLPKILWLQENEPEVWSRVKKIMLPKDYLSLWLTGNIYTEFSDAAGTLLLDIEKKQWSEEITDAFNIDRRILPELIESTDRTGFVKAEIAERYKLTNEVKVFAGGADNAAAALGVGLINEEVGLISMGTSGVVSAYEPKIADYKGKLHFFNHTVPGACYSMGVTLAAGNSLNWYKETFGKGLSFNELLSEVYTVSPGSEGLLFTPYIVGERTPHFDSKIRGSFIGISAHHEQKHFSRAVLEGITFSLRDSKDIMEKTKNKKFKRLISVGGGAQNPDIMQMQADIFNSEMIRLTVEQGPGLGACMIAAFGCGLFDSLEAVTKAFVHYKEASFIPNPKNVARYEQIYQIWKQVYKNTSEISHQLVEFNDEG.

81–82 (MH) contributes to the substrate binding site. The active-site Proton acceptor is aspartate 239.

The protein belongs to the FGGY kinase family.

The enzyme catalyses D-xylulose + ATP = D-xylulose 5-phosphate + ADP + H(+). Its function is as follows. Catalyzes the phosphorylation of D-xylulose to D-xylulose 5-phosphate. This is Xylulose kinase from Lactococcus lactis subsp. lactis (strain IL1403) (Streptococcus lactis).